The sequence spans 673 residues: Vasorin (673 aa).

Positions 1–24 are cleaved as a signal peptide; sequence MHSRSCLPPLLLLLLVLLGSGVQG. Positions 25-53 constitute an LRRNT domain; sequence CPSGCQCNQPQTVFCTARQGTTVPRDVPP. Residues 25 to 576 lie on the Extracellular side of the membrane; sequence CPSGCQCNQP…VTQAREGNLP (552 aa). LRR repeat units lie at residues 54-75, 78-99, 102-123, 126-147, 150-170, 171-192, 194-215, 218-239, 241-265, and 266-288; these read DTVG…CFAG, GLQL…IFQP, NLSN…TFRG, RLER…AFDA, RLLE…LHLP, RLLL…ILDT, NVEA…LFGR, NLHD…IQGL, GLTR…AGLT, and ALQE…SSLF. N-linked (GlcNAc...) asparagine glycosylation is found at N102 and N118. N-linked (GlcNAc...) asparagine glycosylation occurs at N274. The LRRCT domain occupies 299-352; sequence NPFNCLCPLSWFGPWVRENHVVLASPEETRCHFPPKNAGRLLLDLDYADFGCPV. The tract at residues 369–389 is disordered; the sequence is PTLSTSSQAPTWPSLTEPTTQ. A compositionally biased stretch (polar residues) spans 370-389; that stretch reads TLSTSSQAPTWPSLTEPTTQ. One can recognise an EGF-like domain in the interval 406–443; that stretch reads QPQDCPASICLNGGSCRLGARHHWECLCPEGFIGLYCE. Disulfide bonds link C410–C421, C415–C431, and C433–C442. A Fibronectin type-III domain is found at 463–559; the sequence is PLLPLSIEPV…ACGEANTSQA (97 aa). N-linked (GlcNAc...) asparagine glycans are attached at residues N501, N529, and N555. A helical transmembrane segment spans residues 577–597; sequence LLIAPALAAVLLAVLAAAGAA. The Cytoplasmic portion of the chain corresponds to 598-673; it reads YCVRRARATS…QGVLPAKHYI (76 aa). The disordered stretch occupies residues 608 to 648; that stretch reads TAQDKGQVGPGTGPLELEGVKAPLEPGSKATEGGGEALSGG.

Interacts with TGFB1, TGFB2 and TGFB3. Post-translationally, N-glycosylated.

It localises to the membrane. May act as an inhibitor of TGF-beta signaling. In Mus musculus (Mouse), this protein is Vasorin (Vasn).